The sequence spans 141 residues: Cholinesterase (141 aa).

Asn-39 carries N-linked (GlcNAc...) asparagine glycosylation. A substrate-binding site is contributed by 49 to 50 (GG). The Acyl-ester intermediate role is filled by Ser-131. Ser-131 carries the post-translational modification Phosphoserine.

The protein belongs to the type-B carboxylesterase/lipase family. As to quaternary structure, homotetramer; disulfide-linked. Dimer of dimers. As to expression, present in most cells except erythrocytes.

The protein resides in the secreted. It catalyses the reaction an acylcholine + H2O = a carboxylate + choline + H(+). Esterase with broad substrate specificity. Contributes to the inactivation of the neurotransmitter acetylcholine. Can degrade neurotoxic organophosphate esters. In Macaca mulatta (Rhesus macaque), this protein is Cholinesterase (BCHE).